The chain runs to 1377 residues: Protein RhsA (1377 aa).

28 repeat units span residues 330–352 (GKQV…HRHT), 353–374 (GRPE…LNPA), 375–417 (GLSY…EHAD), 418–438 (GSVT…TDAA), 439–460 (GRTT…TTPD), 461–481 (GRAS…TGPD), 482–502 (GLEL…TAPD), 503–525 (GDIT…EDAT), 526–546 (GSRK…TDCS), 547–567 (GYVT…HREE), 568–588 (GLSQ…KDTQ), 589–609 (GHET…IAPD), 610–629 (GSRN…TTQG), 630–650 (GLTR…TSEN), 651–671 (GSHT…TGFD), 672–691 (GRTQ…SEDE), 692–711 (GLVT…RTVK), 712–734 (GETA…HISE), 735–758 (GHRV…QTVH), 808–828 (GDTP…LRSF), 829–850 (GRYE…HLNS), 851–871 (LLSD…ISSP), 872–894 (RQTR…TAAN), 895–930 (LDIR…NRIA), 931–959 (RDAH…VIRT), 960–984 (DDER…TQYE), 985–1019 (EPLV…MSLS), and 1162–1186 (GTTE…HQLQ). Residues 330-1186 (GKQVRSFTYD…LNEENPHQLQ (857 aa)) are 28 X approximate tandem repeats. The interval 1356-1377 (DAKSTQKAWNCRHSRQSNDKKR) is disordered.

It belongs to the RHS family.

Functionally, rhs elements have a nonessential function. They may play an important role in the natural ecology of the cell. This chain is Protein RhsA (rhsA), found in Escherichia coli (strain K12).